Consider the following 576-residue polypeptide: Arginine--tRNA ligase (576 aa).

The 'HIGH' region motif lies at 126–136 (ANPTGPMHIGH).

Belongs to the class-I aminoacyl-tRNA synthetase family. As to quaternary structure, monomer.

It localises to the cytoplasm. The enzyme catalyses tRNA(Arg) + L-arginine + ATP = L-arginyl-tRNA(Arg) + AMP + diphosphate. The chain is Arginine--tRNA ligase from Rickettsia bellii (strain OSU 85-389).